Consider the following 769-residue polypeptide: Multiple C2 domain and transmembrane region protein 5 (769 aa).

C2 domains are found at residues 23 to 143 (SVTG…PQWY), 184 to 305 (PEGV…SRWF), and 345 to 467 (YSSD…THSY). Positions 56, 62, 109, 111, and 116 each coordinate Ca(2+). The next 2 helical transmembrane spans lie at 604–624 (IILV…LFLI) and 712–732 (LFVL…FQVV).

The protein belongs to the MCTP family. Ca(2+) serves as cofactor. Highly expressed in roots meristems and shoot apical meristems (SAMs). Observed in flowers.

It localises to the endoplasmic reticulum membrane. In terms of biological role, may function as a signaling molecule by regulating the trafficking of other regulators. This is Multiple C2 domain and transmembrane region protein 5 from Arabidopsis thaliana (Mouse-ear cress).